Here is a 25-residue protein sequence, read N- to C-terminus: Neuromedin-U-25 (25 aa).

Position 25 is an asparagine amide (N25).

The protein belongs to the NmU family.

The protein resides in the secreted. Stimulates uterine smooth muscle contraction and causes selective vasoconstriction. The sequence is that of Neuromedin-U-25 (NMU) from Sus scrofa (Pig).